Here is a 533-residue protein sequence, read N- to C-terminus: MTQAEIKLCSLLLQEHFGEIVEKIGVHLVRTGSQPLRVIAHDTKASLDQVKKALCVLIHHNLVLYHVHKRGVVEYEAQCSRVLRMLRYPRYIYTTKTLYGDTGELIVEELLLNGKMTMSAVVKKVADRLTETMEDGKTMDYAEVSNAFVRLADTHFVQRCPLVPDTDSSDRGPPPPAPTLVINEKDMYLVPKLSLIGKGKRRRSSDEDATGEPKAKKPRYTDNKEPSPDDGIYWQVNLDRFHQHFRDQAIVSAVANRMDQTSSEIVRTMLRMSEITTPSSAPYTQPLSSNEIFRSLPVGYNISKQVLDQYLTLLADDPLEFIGKSGDSGGGMFVINLHKALASLATATLESVIQERFGSRCARIFRLVLQKKHLEQKQVEDFAMIPAKEAKDMLYKMLSENFILLQEIPKTPDHAPSRTFYLYTVNVLSAARMLLHRCYKSIANLIERRQFETKENKRLLEKSQRVEAIMASMQATGAEEVQLQEIEEMITAPERQQLETLKRNVNKLDASEIQVDETIFLLESYIESTMKRQ.

Residues 162 to 181 (LVPDTDSSDRGPPPPAPTLV) form a disordered region. A Phosphoserine modification is found at Ser-194. Positions 197–228 (GKGKRRRSSDEDATGEPKAKKPRYTDNKEPSP) are disordered. The span at 211–227 (GEPKAKKPRYTDNKEPS) shows a compositional bias: basic and acidic residues.

Belongs to the eukaryotic RPC3/POLR3C RNA polymerase subunit family. In terms of assembly, component of the RNA polymerase III complex consisting of 17 subunits: a ten-subunit horseshoe-shaped catalytic core composed of POLR3A/RPC1, POLR3B/RPC2, POLR1C/RPAC1, POLR1D/RPAC2, POLR3K/RPC10, POLR2E/RPABC1, POLR2F/RPABC2, POLR2H/RPABC3, POLR2K/RPABC4 and POLR2L/RPABC5; a mobile stalk composed of two subunits POLR3H/RPC8 and CRCP/RPC9, protruding from the core and functioning primarily in transcription initiation; and additional subunits homologous to general transcription factors of the RNA polymerase II machinery, POLR3C/RPC3-POLR3F/RPC6-POLR3G/RPC7 heterotrimer required for transcription initiation and POLR3D/RPC4-POLR3E/RPC5 heterodimer involved in both transcription initiation and termination. Directly interacts with POLR3G/RPC7 and POLR3GL. Directly interacts with POLR3F/RPC6. Interacts with GTF3C4. As part of the RNA polymerase III complex, interacts with PKP2.

It localises to the nucleus. Its function is as follows. DNA-dependent RNA polymerase catalyzes the transcription of DNA into RNA using the four ribonucleoside triphosphates as substrates. Specific peripheric component of RNA polymerase III (Pol III) which synthesizes small non-coding RNAs including 5S rRNA, snRNAs, tRNAs and miRNAs from at least 500 distinct genomic loci. Part of POLR3C/RPC3-POLR3F/RPC6-POLR3G/RPC7 heterotrimer, coordinates the dynamics of Pol III stalk and clamp modules during the transition from apo to elongation state. Pol III plays a key role in sensing and limiting infection by intracellular bacteria and DNA viruses. Acts as a nuclear and cytosolic DNA sensor involved in innate immune response. Can sense non-self dsDNA that serves as template for transcription into dsRNA. The non-self RNA polymerase III transcripts, such as Epstein-Barr virus-encoded RNAs (EBERs) induce type I interferon and NF-kappa-B through the RIG-I pathway. Preferentially binds single-stranded DNA (ssDNA) in a sequence-independent manner. The polypeptide is DNA-directed RNA polymerase III subunit RPC3 (Mus musculus (Mouse)).